The sequence spans 190 residues: Glutathione peroxidase 2 (190 aa).

Residue selenocysteine 40 is part of the active site. Residue selenocysteine 40 is a non-standard amino acid, selenocysteine.

The protein belongs to the glutathione peroxidase family. As to quaternary structure, homotetramer. As to expression, mostly in liver and gastrointestinal tract, not found in heart or kidney.

It localises to the cytoplasm. It is found in the cytosol. The enzyme catalyses 2 glutathione + H2O2 = glutathione disulfide + 2 H2O. It catalyses the reaction a hydroperoxy polyunsaturated fatty acid + 2 glutathione = a hydroxy polyunsaturated fatty acid + glutathione disulfide + H2O. The catalysed reaction is tert-butyl hydroperoxide + 2 glutathione = tert-butanol + glutathione disulfide + H2O. It carries out the reaction cumene hydroperoxide + 2 glutathione = 2-phenylpropan-2-ol + glutathione disulfide + H2O. The enzyme catalyses (13S)-hydroperoxy-(9Z,11E)-octadecadienoate + 2 glutathione = (13S)-hydroxy-(9Z,11E)-octadecadienoate + glutathione disulfide + H2O. It catalyses the reaction (5S)-hydroperoxy-(6E,8Z,11Z,14Z)-eicosatetraenoate + 2 glutathione = (5S)-hydroxy-(6E,8Z,11Z,14Z)-eicosatetraenoate + glutathione disulfide + H2O. The catalysed reaction is (12R)-hydroperoxy-(5Z,8Z,10E,14Z)-eicosatetraenoate + 2 glutathione = (12R)-hydroxy-(5Z,8Z,10E,14Z)-eicosatetraenoate + glutathione disulfide + H2O. It carries out the reaction (15S)-hydroperoxy-(5Z,8Z,11Z,13E)-eicosatetraenoate + 2 glutathione = (15S)-hydroxy-(5Z,8Z,11Z,13E)-eicosatetraenoate + glutathione disulfide + H2O. Functionally, catalyzes the reduction of hydroperoxides in a glutathione-dependent manner thus regulating cellular redox homeostasis. Can reduce small soluble hydroperoxides such as H2O2, cumene hydroperoxide and tert-butyl hydroperoxide, as well as several fatty acid-derived hydroperoxides. Cannot reduce phosphatidycholine hydroperoxide. This chain is Glutathione peroxidase 2, found in Homo sapiens (Human).